A 246-amino-acid polypeptide reads, in one-letter code: NLP effector protein Pc118548 (246 aa).

An N-terminal signal peptide occupies residues 1–19; the sequence is MNFRAFLLAAIAGIATINA. The short motif at 122–128 is the Hepta-peptide GHRHDWE motif element; that stretch reads GHRHYWE. N-linked (GlcNAc...) asparagine glycosylation is present at Asn-141.

This sequence belongs to the Necrosis inducing protein (NPP1) family.

The protein localises to the secreted. In terms of biological role, secreted effector that contributes strongly to virulence during infection by P.capsici. Induces cell death in the Solanaceae, including Nicotiana benthamiana and hot pepper. The polypeptide is NLP effector protein Pc118548 (Phytophthora capsici).